Reading from the N-terminus, the 193-residue chain is Fe/S biogenesis protein NfuA (193 aa).

2 residues coordinate [4Fe-4S] cluster: cysteine 149 and cysteine 152.

It belongs to the NfuA family. As to quaternary structure, homodimer. Requires [4Fe-4S] cluster as cofactor.

Involved in iron-sulfur cluster biogenesis. Binds a 4Fe-4S cluster, can transfer this cluster to apoproteins, and thereby intervenes in the maturation of Fe/S proteins. Could also act as a scaffold/chaperone for damaged Fe/S proteins. The sequence is that of Fe/S biogenesis protein NfuA from Psychromonas ingrahamii (strain DSM 17664 / CCUG 51855 / 37).